A 472-amino-acid polypeptide reads, in one-letter code: Ras-GEF domain-containing family member 1B (472 aa).

The N-terminal Ras-GEF domain occupies 34–164; that stretch reads QDNNLLSGSL…IIQNLIRKLA (131 aa). The Ras-GEF domain occupies 204-452; the sequence is DPYTVAQQLT…YLASYESEGP (249 aa).

Functionally, guanine nucleotide exchange factor (GEF) with specificity for rap2a and other Ras family proteins (in vitro). This Xenopus tropicalis (Western clawed frog) protein is Ras-GEF domain-containing family member 1B (rasgef1b).